The sequence spans 549 residues: 65-kDa microtubule-associated protein 9 (549 aa).

3 coiled-coil regions span residues 36 to 123 (IEIE…ERKI), 160 to 199 (SLRK…CSVL), and 459 to 492 (GNRL…HQGQ). Positions 474-549 (EEKEQERRRK…SFSTPLSRHG (76 aa)) are disordered. Residues 481–490 (RRKRDLKKHQ) show a composition bias toward basic residues. 2 positions are modified to phosphoserine: Ser-501 and Ser-546. Residues 514 to 549 (VSTNKRFVSSPHTPQTDSPHSAKSNQSFSTPLSRHG) are compositionally biased toward polar residues.

Belongs to the MAP65/ASE1 family. As to quaternary structure, forms dimer. Binds to microtubules (MT).

It is found in the nucleus. Its subcellular location is the cytoplasm. The protein localises to the cytoskeleton. It localises to the spindle pole. The protein is 65-kDa microtubule-associated protein 9 (MAP65-9) of Arabidopsis thaliana (Mouse-ear cress).